The following is a 152-amino-acid chain: Phospholipase A2 pkP2 (152 aa).

The first 21 residues, 1-21, serve as a signal peptide directing secretion; that stretch reads MNPAHLLVLLAVCVSLLGASA. Residues 22–27 constitute a propeptide that is removed on maturation; it reads IPPLPL. 7 disulfide bridges follow: cysteine 38–cysteine 104, cysteine 54–cysteine 151, cysteine 56–cysteine 72, cysteine 71–cysteine 132, cysteine 78–cysteine 125, cysteine 88–cysteine 118, and cysteine 111–cysteine 123. Positions 55, 57, and 59 each coordinate Ca(2+). Histidine 75 is an active-site residue. Aspartate 76 contacts Ca(2+). The active site involves aspartate 126.

This sequence belongs to the phospholipase A2 family. Group I subfamily. Requires Ca(2+) as cofactor.

It localises to the secreted. It carries out the reaction a 1,2-diacyl-sn-glycero-3-phosphocholine + H2O = a 1-acyl-sn-glycero-3-phosphocholine + a fatty acid + H(+). In terms of biological role, PA2 catalyzes the calcium-dependent hydrolysis of the 2-acyl groups in 3-sn-phosphoglycerides. The sequence is that of Phospholipase A2 pkP2 from Laticauda semifasciata (Black-banded sea krait).